The chain runs to 357 residues: DNA replication and repair protein RecF (357 aa).

Residue 30-37 (GANGSGKT) participates in ATP binding.

Belongs to the RecF family.

It localises to the cytoplasm. Its function is as follows. The RecF protein is involved in DNA metabolism; it is required for DNA replication and normal SOS inducibility. RecF binds preferentially to single-stranded, linear DNA. It also seems to bind ATP. This Salmonella paratyphi A (strain ATCC 9150 / SARB42) protein is DNA replication and repair protein RecF.